Reading from the N-terminus, the 142-residue chain is Fluoride-specific ion channel FluC 1 (142 aa).

The next 4 membrane-spanning stretches (helical) occupy residues 23 to 43, 54 to 74, 79 to 99, and 116 to 136; these read VNIA…YLID, LPLG…GLIG, GWLL…FSTF, and LGNV…AVSL. Positions 91 and 94 each coordinate Na(+).

It belongs to the fluoride channel Fluc/FEX (TC 1.A.43) family.

The protein resides in the cell membrane. The catalysed reaction is fluoride(in) = fluoride(out). Its activity is regulated as follows. Na(+) is not transported, but it plays an essential structural role and its presence is essential for fluoride channel function. Functionally, fluoride-specific ion channel. Important for reducing fluoride concentration in the cell, thus reducing its toxicity. The sequence is that of Fluoride-specific ion channel FluC 1 from Nocardia farcinica (strain IFM 10152).